A 380-amino-acid chain; its full sequence is O-phospho-L-seryl-tRNA:Cys-tRNA synthase (380 aa).

Pyridoxal 5'-phosphate-binding positions include 86–87 (AR), Asn-192, and 215–217 (SGH). At Lys-218 the chain carries N6-(pyridoxal phosphate)lysine.

It belongs to the SepCysS family. In terms of assembly, homodimer. Interacts with SepRS. Pyridoxal 5'-phosphate is required as a cofactor.

The enzyme catalyses O-phospho-L-seryl-tRNA(Cys) + hydrogen sulfide + H(+) = L-cysteinyl-tRNA(Cys) + phosphate. In terms of biological role, converts O-phospho-L-seryl-tRNA(Cys) (Sep-tRNA(Cys)) to L-cysteinyl-tRNA(Cys) (Cys-tRNA(Cys)). In Methanococcus maripaludis (strain C6 / ATCC BAA-1332), this protein is O-phospho-L-seryl-tRNA:Cys-tRNA synthase.